Consider the following 546-residue polypeptide: Chaperonin GroEL 1 (546 aa).

ATP is bound by residues 30–33, Lys-51, 87–91, Gly-415, 479–481, and Asp-495; these read TLGP, DGTTT, and NAA.

This sequence belongs to the chaperonin (HSP60) family. As to quaternary structure, forms a cylinder of 14 subunits composed of two heptameric rings stacked back-to-back. Interacts with the co-chaperonin GroES.

The protein resides in the cytoplasm. It catalyses the reaction ATP + H2O + a folded polypeptide = ADP + phosphate + an unfolded polypeptide.. Functionally, together with its co-chaperonin GroES, plays an essential role in assisting protein folding. The GroEL-GroES system forms a nano-cage that allows encapsulation of the non-native substrate proteins and provides a physical environment optimized to promote and accelerate protein folding. The polypeptide is Chaperonin GroEL 1 (Vibrio vulnificus (strain CMCP6)).